Consider the following 445-residue polypeptide: Methionine aminopeptidase 2-2 (445 aa).

A disordered region spans residues 1–92; it reads MAAQASEDLK…RVPISQLFPN (92 aa). A compositionally biased stretch (low complexity) spans 18–33; that stretch reads AGDSKAAAATAGQAEA. A compositionally biased stretch (acidic residues) spans 34–46; that stretch reads GEAEDDSDDDEVD. The span at 47-58 shows a compositional bias: low complexity; it reads GNAAPEGAASGA. Over residues 59 to 74 the composition is skewed to basic residues; it reads AKKKKKRKPKKKKKGG. Substrate is bound at residue His-198. A divalent metal cation is bound by residues Asp-218, Asp-229, and His-298. His-306 provides a ligand contact to substrate. Residues Glu-331 and Glu-426 each contribute to the a divalent metal cation site.

It belongs to the peptidase M24A family. Methionine aminopeptidase eukaryotic type 2 subfamily. It depends on Co(2+) as a cofactor. The cofactor is Zn(2+). Mn(2+) serves as cofactor. Fe(2+) is required as a cofactor.

It localises to the cytoplasm. The enzyme catalyses Release of N-terminal amino acids, preferentially methionine, from peptides and arylamides.. In terms of biological role, cotranslationally removes the N-terminal methionine from nascent proteins. The N-terminal methionine is often cleaved when the second residue in the primary sequence is small and uncharged (Met-Ala-, Cys, Gly, Pro, Ser, Thr, or Val). The protein is Methionine aminopeptidase 2-2 of Aspergillus terreus (strain NIH 2624 / FGSC A1156).